A 185-amino-acid polypeptide reads, in one-letter code: NEDD8-conjugating enzyme UBE2F (185 aa).

The segment at 1-29 (MLTLASKLKREEGVRAGRTPAGSNDAAHR) is interaction with uba3. Residues 32-185 (IRDRLLIKEV…VQDFIKNYAR (154 aa)) form the UBC core domain. C116 functions as the Glycyl thioester intermediate in the catalytic mechanism.

The protein belongs to the ubiquitin-conjugating enzyme family. UBE2F subfamily.

The enzyme catalyses [E1 NEDD8-activating enzyme]-S-[NEDD8 protein]-yl-L-cysteine + [E2 NEDD8-conjugating enzyme]-L-cysteine = [E1 NEDD8-activating enzyme]-L-cysteine + [E2 NEDD8-conjugating enzyme]-S-[NEDD8-protein]-yl-L-cysteine.. Its pathway is protein modification; protein neddylation. Its function is as follows. Accepts the ubiquitin-like protein NEDD8 from the UBA3-NAE1 E1 complex and catalyzes its covalent attachment to other proteins. Together with the E3 ubiquitin ligase rnf7/rbx2, specifically neddylates cullin-5 (cul5). Does not neddylate cul1, cul2, cul3, cul4a or cul4b. This chain is NEDD8-conjugating enzyme UBE2F (ube2f), found in Danio rerio (Zebrafish).